Reading from the N-terminus, the 39-residue chain is uncharacterized protein (39 aa).

This is an uncharacterized protein from Saccharomyces cerevisiae (strain ATCC 204508 / S288c) (Baker's yeast).